We begin with the raw amino-acid sequence, 402 residues long: Beta-1,4-galactosyltransferase 1 (402 aa).

Residues 1–24 (MKFREPLLGGSAAMPGASLQRACR) are Cytoplasmic-facing. A helical; Signal-anchor for type II membrane protein membrane pass occupies residues 25–44 (LLVAVCALHLGVTLVYYLAG). Residues 45-402 (RDLRRLPQLV…KITVDIGTPS (358 aa)) are Lumenal-facing. Positions 77-130 (LRLRGVAPPPPLQNSSKPRSRAPSNLDAYSHPGPGPGPGSNLTSAPVPSTTTRS) are disordered. Asparagine 90 and asparagine 117 each carry an N-linked (GlcNAc...) asparagine glycan. Residues 116-130 (SNLTSAPVPSTTTRS) are compositionally biased toward polar residues. A disulfide bond links cysteine 134 and cysteine 176. UDP-alpha-D-galactose is bound by residues 187–191 (PFRNR), 226–228 (FNR), 253–254 (VD), and tryptophan 314. A disulfide bridge connects residues cysteine 247 and cysteine 266. Aspartate 254 serves as a coordination point for Mn(2+). 316–319 (GEDD) provides a ligand contact to N-acetyl-D-glucosamine. Histidine 347 provides a ligand contact to Mn(2+). Residue 347–349 (HSR) coordinates UDP-alpha-D-galactose. Residue arginine 359 participates in N-acetyl-D-glucosamine binding.

The protein belongs to the glycosyltransferase 7 family. As to quaternary structure, homodimer; and heterodimer with alpha-lactalbumin to form lactose synthase. Interacts (via N-terminal cytoplasmic domain) with UBE2Q1 (via N-terminus); the interaction is direct. Mn(2+) serves as cofactor. In terms of processing, the soluble form derives from the membrane forms by proteolytic processing. Detected in milk (at protein level).

It localises to the golgi apparatus. The protein resides in the golgi stack membrane. It is found in the cell membrane. The protein localises to the cell surface. Its subcellular location is the cell projection. It localises to the filopodium. The protein resides in the secreted. The enzyme catalyses D-glucose + UDP-alpha-D-galactose = lactose + UDP + H(+). It carries out the reaction an N-acetyl-beta-D-glucosaminyl derivative + UDP-alpha-D-galactose = a beta-D-galactosyl-(1-&gt;4)-N-acetyl-beta-D-glucosaminyl derivative + UDP + H(+). The catalysed reaction is N-acetyl-D-glucosamine + UDP-alpha-D-galactose = beta-D-galactosyl-(1-&gt;4)-N-acetyl-D-glucosamine + UDP + H(+). It catalyses the reaction a beta-D-GlcNAc-(1-&gt;3)-beta-D-Gal-(1-&gt;4)-beta-D-Glc-(1&lt;-&gt;1)-Cer(d18:1(4E)) + UDP-alpha-D-galactose = a neolactoside nLc4Cer(d18:1(4E)) + UDP + H(+). The enzyme catalyses a beta-D-glucosylceramide + UDP-alpha-D-galactose = a beta-D-galactosyl-(1-&gt;4)-beta-D-glucosyl-(1&lt;-&gt;1)-ceramide + UDP + H(+). It carries out the reaction a neolactoside IV(3)-beta-GlcNAc-nLc4Cer + UDP-alpha-D-galactose = a neolactoside nLc6Cer + UDP + H(+). It functions in the pathway protein modification; protein glycosylation. Functionally, the Golgi complex form catalyzes the production of lactose in the lactating mammary gland and could also be responsible for the synthesis of complex-type N-linked oligosaccharides in many glycoproteins as well as the carbohydrate moieties of glycolipids. The cell surface form functions as a recognition molecule during a variety of cell to cell and cell to matrix interactions, as those occurring during development and egg fertilization, by binding to specific oligosaccharide ligands on opposing cells or in the extracellular matrix. The secreted form is responsible for the synthesis of complex-type to N-linked oligosaccharides in many glycoproteins as well as the carbohydrate moieties of glycolipids. The chain is Beta-1,4-galactosyltransferase 1 (B4GALT1) from Bos taurus (Bovine).